Here is a 221-residue protein sequence, read N- to C-terminus: Small ribosomal subunit protein uS5 (221 aa).

The S5 DRBM domain occupies 46–109 (LKDEVINIER…DNAKLNIIEI (64 aa)).

The protein belongs to the universal ribosomal protein uS5 family. Part of the 30S ribosomal subunit. Contacts protein S4.

Its function is as follows. With S4 and S12 plays an important role in translational accuracy. This chain is Small ribosomal subunit protein uS5, found in Picrophilus torridus (strain ATCC 700027 / DSM 9790 / JCM 10055 / NBRC 100828 / KAW 2/3).